Consider the following 354-residue polypeptide: UDP-N-acetylglucosamine--N-acetylmuramyl-(pentapeptide) pyrophosphoryl-undecaprenol N-acetylglucosamine transferase (354 aa).

Residues 15–17 (TGG), Asn127, Arg163, Ser191, Ile244, 263–268 (ALTVSE), and Gln288 contribute to the UDP-N-acetyl-alpha-D-glucosamine site.

It belongs to the glycosyltransferase 28 family. MurG subfamily.

Its subcellular location is the cell inner membrane. It carries out the reaction di-trans,octa-cis-undecaprenyl diphospho-N-acetyl-alpha-D-muramoyl-L-alanyl-D-glutamyl-meso-2,6-diaminopimeloyl-D-alanyl-D-alanine + UDP-N-acetyl-alpha-D-glucosamine = di-trans,octa-cis-undecaprenyl diphospho-[N-acetyl-alpha-D-glucosaminyl-(1-&gt;4)]-N-acetyl-alpha-D-muramoyl-L-alanyl-D-glutamyl-meso-2,6-diaminopimeloyl-D-alanyl-D-alanine + UDP + H(+). It participates in cell wall biogenesis; peptidoglycan biosynthesis. Its function is as follows. Cell wall formation. Catalyzes the transfer of a GlcNAc subunit on undecaprenyl-pyrophosphoryl-MurNAc-pentapeptide (lipid intermediate I) to form undecaprenyl-pyrophosphoryl-MurNAc-(pentapeptide)GlcNAc (lipid intermediate II). The chain is UDP-N-acetylglucosamine--N-acetylmuramyl-(pentapeptide) pyrophosphoryl-undecaprenol N-acetylglucosamine transferase from Aliivibrio fischeri (strain ATCC 700601 / ES114) (Vibrio fischeri).